Consider the following 133-residue polypeptide: Fatty acid-binding protein, heart (133 aa).

An N-acetylvaline modification is found at Val2. A Phosphothreonine modification is found at Thr8. Phosphotyrosine; by Tyr-kinases is present on Tyr20. Ser23 is subject to Phosphoserine. The residue at position 30 (Thr30) is a Phosphothreonine. Ser83 is subject to Phosphoserine. A (9Z)-octadecenoate-binding site is contributed by 127 to 129 (RTY). Residue 127–129 (RTY) participates in hexadecanoate binding. 127–129 (RTY) contacts octadecanoate.

It belongs to the calycin superfamily. Fatty-acid binding protein (FABP) family.

The protein resides in the cytoplasm. In terms of biological role, FABPs are thought to play a role in the intracellular transport of long-chain fatty acids and their acyl-CoA esters. The polypeptide is Fatty acid-binding protein, heart (FABP3) (Bos mutus grunniens (Wild yak)).